Consider the following 612-residue polypeptide: Alpha-glycerophosphate oxidase (612 aa).

21-49 (DLLIIGGGITGAGVALQAAASGLDTGLIE) lines the FAD pocket. Basic and acidic residues predominate over residues 398-408 (VETSTSEKELD). Positions 398-418 (VETSTSEKELDPSAVSRGSSF) are disordered.

This sequence belongs to the FAD-dependent glycerol-3-phosphate dehydrogenase family. It depends on FAD as a cofactor.

The protein localises to the cytoplasm. It carries out the reaction sn-glycerol 3-phosphate + O2 = dihydroxyacetone phosphate + H2O2. This Streptococcus pyogenes serotype M18 (strain MGAS8232) protein is Alpha-glycerophosphate oxidase (glpO).